A 702-amino-acid polypeptide reads, in one-letter code: MPINKSEKPESCDNVKVVVRCRPLNEREKSMCYKQAVSVDEMRGTITVHKTDSSNEPPKTFTFDTVFGPESKQLDVYNLTARPIIDSVLEGYNGTIFAYGQTGTGKTFTMEGVRAVPELRGIIPNSFAHIFGHIAKAEGDTRFLVRVSYLEIYNEEVRDLLGKDQTQRLEVKERPDVGVYIKDLSAYVVNNADDMDRIMTLGHKNRSVGATNMNEHSSRSHAIFTITIECSEKGIDGNMHVRMGKLHLVDLAGSERQAKTGATGQRLKEATKINLSLSTLGNVISALVDGKSTHVPYRNSKLTRLLQDSLGGNSKTMMCANIGPADYNYDETISTLRYANRAKNIKNKARINEDPKDALLRQFQKEIEELKKKLEEGEEISGSDISGSEEDDDEEGEVGEDGEKRKKRRDQAGKKKVSPDKMIEMQAKIDEERKALETKLDMEEEERNKARAELEKREKDLLKAQQEHQSLLEKLSALEKKVIVGGVDLLAKAEEQEKLLEESNMELEERRKRAEQLRRELEEKEQERLDIEEKYTSLQEEAQGKTKKLKKVWTMLMAAKSEMADLQQEHQREIEGLLENIRQLSRELRLQMLIIDNFIPRDYQEMIENYVHWNEDIGEWQLKCVAYTGNNMRKQTPVPDKKEKDPFEVDLSHVYLAYTEESLRQSLMKLERPRTSKGKARPKTGRRKRSAKPETVIDSLLQ.

The 332-residue stretch at Asn14–Ile345 folds into the Kinesin motor domain. Gly100 to Thr107 is an ATP binding site. Residues Pro355–Leu593 are a coiled coil. Disordered stretches follow at residues Lys372 to Glu424 and Leu667 to Gln702. The segment covering Glu376 to Glu400 has biased composition (acidic residues). Residues Asp410–Glu424 are compositionally biased toward basic and acidic residues. The tract at residues Pro600–Gln702 is globular. Basic residues predominate over residues Thr675 to Ser690. Residue Ser690 is modified to Phosphoserine.

This sequence belongs to the TRAFAC class myosin-kinesin ATPase superfamily. Kinesin family. Kinesin II subfamily. In terms of assembly, heterodimer of KIF3A and KIF3B. Interacts with CIMAP3. Interacts with CLN3. Interacts with DCTN1. Interacts with FLCN. Interacts with AP3B1.

It localises to the cytoplasm. The protein localises to the cytoskeleton. Its subcellular location is the cell projection. It is found in the cilium. The protein resides in the microtubule organizing center. It localises to the centrosome. The protein localises to the centriole. Functionally, microtubule-based anterograde translocator for membranous organelles. Plus end-directed microtubule sliding activity in vitro. Plays a role in primary cilia formation. Plays a role in centriole cohesion and subdistal appendage organization and function. Regulates the formation of the subdistal appendage via recruitment of DCTN1 to the centriole. Also required for ciliary basal feet formation and microtubule anchoring to mother centriole. This is Kinesin-like protein KIF3A (KIF3A) from Macaca fascicularis (Crab-eating macaque).